A 94-amino-acid polypeptide reads, in one-letter code: Acylphosphatase (94 aa).

In terms of domain architecture, Acylphosphatase-like spans A7–G94. Active-site residues include R22 and N40.

The protein belongs to the acylphosphatase family.

It carries out the reaction an acyl phosphate + H2O = a carboxylate + phosphate + H(+). This is Acylphosphatase (acyP) from Rhizobium etli (strain ATCC 51251 / DSM 11541 / JCM 21823 / NBRC 15573 / CFN 42).